Consider the following 488-residue polypeptide: MKILMRADTHVSYSVPAEGPKANFTFSQVLAALSVSLCSLVVGFVSAYTSPALVSMTDRTITSFEVTKDAGSWVGGIMPLAALAGGITGGPLIEYLGRRTTILATAVPFIVSSLLIACAVNVIMILCGRFLTGFCVGIASLSLPVYLGETLQPEVRGTLGLLPTALGNIGILVCYVAGSFMNWSMLAFLGAALPVPFLILMIIIPETPRWFVNRGQEERARKALKWLRGKEADVEPELKDLMQSQAEADSQARRNTCLELFKRINLKPLSISLGLMFFQQFSGINAVIFYTVQIFKDAGSTIDSNLCTIIVGIVNFFATFMGILLIDRLGRKILLYISDIAMILTLSILGGFFYCKAHGPDVSHLGWLPLTCFVIYILGFSLGFGPIPWLMMGEILPAKIRGPAASVVTAFNWFCTFVVTKTFQDLTVAMGAHGAFWLFGVVCIVGLFFVIICVPETRGKSLEEIERKMMGRVPISAVVNIKPFSFNM.

The Cytoplasmic portion of the chain corresponds to 1–28 (MKILMRADTHVSYSVPAEGPKANFTFSQ). A helical membrane pass occupies residues 29–49 (VLAALSVSLCSLVVGFVSAYT). The Extracellular segment spans residues 50–72 (SPALVSMTDRTITSFEVTKDAGS). Residues 73–93 (WVGGIMPLAALAGGITGGPLI) traverse the membrane as a helical segment. Residues 94–105 (EYLGRRTTILAT) lie on the Cytoplasmic side of the membrane. The chain crosses the membrane as a helical span at residues 106–126 (AVPFIVSSLLIACAVNVIMIL). The Extracellular segment spans residues 127–129 (CGR). A helical transmembrane segment spans residues 130 to 150 (FLTGFCVGIASLSLPVYLGET). Residues 151–160 (LQPEVRGTLG) lie on the Cytoplasmic side of the membrane. Residues 161-181 (LLPTALGNIGILVCYVAGSFM) form a helical membrane-spanning segment. Asparagine 182 carries an N-linked (GlcNAc...) asparagine glycan. The Extracellular portion of the chain corresponds to 182 to 184 (NWS). The chain crosses the membrane as a helical span at residues 185-205 (MLAFLGAALPVPFLILMIIIP). Topologically, residues 206–268 (ETPRWFVNRG…ELFKRINLKP (63 aa)) are cytoplasmic. Residues 269–289 (LSISLGLMFFQQFSGINAVIF) traverse the membrane as a helical segment. Topologically, residues 290 to 305 (YTVQIFKDAGSTIDSN) are extracellular. A helical transmembrane segment spans residues 306 to 326 (LCTIIVGIVNFFATFMGILLI). Over 327–332 (DRLGRK) the chain is Cytoplasmic. Residues 333 to 353 (ILLYISDIAMILTLSILGGFF) form a helical membrane-spanning segment. The Extracellular portion of the chain corresponds to 354 to 372 (YCKAHGPDVSHLGWLPLTC). Residues 373–393 (FVIYILGFSLGFGPIPWLMMG) traverse the membrane as a helical segment. The Cytoplasmic segment spans residues 394–402 (EILPAKIRG). The helical transmembrane segment at 403–423 (PAASVVTAFNWFCTFVVTKTF) threads the bilayer. Residues 424 to 433 (QDLTVAMGAH) lie on the Extracellular side of the membrane. The chain crosses the membrane as a helical span at residues 434–454 (GAFWLFGVVCIVGLFFVIICV). At 455–488 (PETRGKSLEEIERKMMGRVPISAVVNIKPFSFNM) the chain is on the cytoplasmic side.

The protein belongs to the major facilitator superfamily. Sugar transporter (TC 2.A.1.1) family. Trehalose transporter subfamily.

It localises to the cell membrane. Its function is as follows. Fails to transport trehalose. This Drosophila simulans (Fruit fly) protein is Facilitated trehalose transporter Tret1-2 homolog.